A 282-amino-acid chain; its full sequence is ATP synthase gamma chain (282 aa).

This sequence belongs to the ATPase gamma chain family. F-type ATPases have 2 components, CF(1) - the catalytic core - and CF(0) - the membrane proton channel. CF(1) has five subunits: alpha(3), beta(3), gamma(1), delta(1), epsilon(1). CF(0) has three main subunits: a, b and c.

It is found in the cell membrane. Produces ATP from ADP in the presence of a proton gradient across the membrane. The gamma chain is believed to be important in regulating ATPase activity and the flow of protons through the CF(0) complex. The polypeptide is ATP synthase gamma chain (Clostridium botulinum (strain Langeland / NCTC 10281 / Type F)).